The chain runs to 116 residues: Ribonuclease P protein component (116 aa).

This sequence belongs to the RnpA family. Consists of a catalytic RNA component (M1 or rnpB) and a protein subunit.

It carries out the reaction Endonucleolytic cleavage of RNA, removing 5'-extranucleotides from tRNA precursor.. Functionally, RNaseP catalyzes the removal of the 5'-leader sequence from pre-tRNA to produce the mature 5'-terminus. It can also cleave other RNA substrates such as 4.5S RNA. The protein component plays an auxiliary but essential role in vivo by binding to the 5'-leader sequence and broadening the substrate specificity of the ribozyme. This Leuconostoc mesenteroides subsp. mesenteroides (strain ATCC 8293 / DSM 20343 / BCRC 11652 / CCM 1803 / JCM 6124 / NCDO 523 / NBRC 100496 / NCIMB 8023 / NCTC 12954 / NRRL B-1118 / 37Y) protein is Ribonuclease P protein component.